Reading from the N-terminus, the 451-residue chain is Tryptophan biosynthesis protein TrpCF (451 aa).

Residues 1–256 (MQETILNKII…TNIKSLIIGD (256 aa)) form an indole-3-glycerol phosphate synthase region. Positions 257-451 (NKVCGLTRII…ISLIFKKLTF (195 aa)) are N-(5'-phosphoribosyl)anthranilate isomerase.

It in the N-terminal section; belongs to the TrpC family. In the C-terminal section; belongs to the TrpF family. In terms of assembly, monomer.

It carries out the reaction N-(5-phospho-beta-D-ribosyl)anthranilate = 1-(2-carboxyphenylamino)-1-deoxy-D-ribulose 5-phosphate. The enzyme catalyses 1-(2-carboxyphenylamino)-1-deoxy-D-ribulose 5-phosphate + H(+) = (1S,2R)-1-C-(indol-3-yl)glycerol 3-phosphate + CO2 + H2O. It functions in the pathway amino-acid biosynthesis; L-tryptophan biosynthesis; L-tryptophan from chorismate: step 3/5. Its pathway is amino-acid biosynthesis; L-tryptophan biosynthesis; L-tryptophan from chorismate: step 4/5. Functionally, bifunctional enzyme that catalyzes two sequential steps of tryptophan biosynthetic pathway. The first reaction is catalyzed by the isomerase, coded by the TrpF domain; the second reaction is catalyzed by the synthase, coded by the TrpC domain. The polypeptide is Tryptophan biosynthesis protein TrpCF (trpC) (Buchnera aphidicola subsp. Schizaphis graminum (strain Sg)).